We begin with the raw amino-acid sequence, 963 residues long: Copalyl diphosphate synthase (963 aa).

A type II terpene cyclase (TC) region spans residues 1–539 (MSPMDLQESA…EAYILAALKR (539 aa)). The substrate binding stretch occupies residues 227 to 292 (ATQWDDECED…FIEKIRSYLH (66 aa)). Mg(2+)-binding residues include D311 and D314. The DXDD signature appears at 311–314 (DADD). The short motif at 333–341 (AMLKEFEEE) is the NSE/DTE element. Substrate-binding positions include 337–341 (EFEEE) and 521–522 (VT). Residues 540–659 (AADLPDENAE…SVSVHTDHSD (120 aa)) are linker. Over residues 627–648 (TNGHYVNGTNHETPLTNGISNG) the composition is skewed to polar residues. A disordered region spans residues 627–657 (TNGHYVNGTNHETPLTNGISNGDSVSVHTDH). The geranylfarnesyl diphosphate synthase (PT) stretch occupies residues 660-963 (SYYQRSDWTA…KILARMSLEL (304 aa)). Isopentenyl diphosphate contacts are provided by K688, R691, and H720. Residues D727 and D731 each coordinate Mg(2+). The DDXXD 1 motif lies at 727–731 (DDIQD). R736 lines the dimethylallyl diphosphate pocket. Position 737 (R737) interacts with isopentenyl diphosphate. 6 residues coordinate dimethylallyl diphosphate: K814, T815, Q848, N855, K865, and K875. The DDXXD 2 motif lies at 851-855 (DDYLN).

It in the N-terminal section; belongs to the terpene synthase family. This sequence in the C-terminal section; belongs to the FPP/GGPP synthase family. As to quaternary structure, homohexamer. It depends on Mg(2+) as a cofactor.

It catalyses the reaction isopentenyl diphosphate + (2E,6E)-farnesyl diphosphate = (2E,6E,10E)-geranylgeranyl diphosphate + diphosphate. The enzyme catalyses (2E,6E,10E)-geranylgeranyl diphosphate = (+)-copalyl diphosphate. In terms of biological role, bifunctional terpene synthase that possesses both prenyltransferase and type II terpene cyclase activity, converting isopentenyl diphosphate (IPP) and dimethylallyl diphosphate (DMAPP) into geranylgeranyl diphosphate (GGPP) and further converting GGPP into copalyl diphosphate, respectively. The sequence is that of Copalyl diphosphate synthase from Talaromyces verruculosus (Penicillium verruculosum).